The chain runs to 779 residues: Ribosome-releasing factor 2, mitochondrial (779 aa).

Positions 68 to 353 (AKIRNIGIMA…AVTTYLPSPE (286 aa)) constitute a tr-type G domain. Residues 77–84 (AHIDAGKT), 141–145 (DTPGH), and 195–198 (NKMD) each bind GTP.

Belongs to the TRAFAC class translation factor GTPase superfamily. Classic translation factor GTPase family. EF-G/EF-2 subfamily.

The protein resides in the mitochondrion. The enzyme catalyses GTP + H2O = GDP + phosphate + H(+). Its function is as follows. Mitochondrial GTPase that mediates the disassembly of ribosomes from messenger RNA at the termination of mitochondrial protein biosynthesis. Acts in collaboration with MRRF. GTP hydrolysis follows the ribosome disassembly and probably occurs on the ribosome large subunit. Not involved in the GTP-dependent ribosomal translocation step during translation elongation. This chain is Ribosome-releasing factor 2, mitochondrial (Gfm2), found in Rattus norvegicus (Rat).